We begin with the raw amino-acid sequence, 95 residues long: Aspartyl/glutamyl-tRNA(Asn/Gln) amidotransferase subunit C (95 aa).

Belongs to the GatC family. In terms of assembly, heterotrimer of A, B and C subunits.

The enzyme catalyses L-glutamyl-tRNA(Gln) + L-glutamine + ATP + H2O = L-glutaminyl-tRNA(Gln) + L-glutamate + ADP + phosphate + H(+). It catalyses the reaction L-aspartyl-tRNA(Asn) + L-glutamine + ATP + H2O = L-asparaginyl-tRNA(Asn) + L-glutamate + ADP + phosphate + 2 H(+). Allows the formation of correctly charged Asn-tRNA(Asn) or Gln-tRNA(Gln) through the transamidation of misacylated Asp-tRNA(Asn) or Glu-tRNA(Gln) in organisms which lack either or both of asparaginyl-tRNA or glutaminyl-tRNA synthetases. The reaction takes place in the presence of glutamine and ATP through an activated phospho-Asp-tRNA(Asn) or phospho-Glu-tRNA(Gln). This Methylorubrum populi (strain ATCC BAA-705 / NCIMB 13946 / BJ001) (Methylobacterium populi) protein is Aspartyl/glutamyl-tRNA(Asn/Gln) amidotransferase subunit C.